A 225-amino-acid chain; its full sequence is 2-C-methyl-D-erythritol 4-phosphate cytidylyltransferase (225 aa).

The protein belongs to the IspD/TarI cytidylyltransferase family. IspD subfamily.

It catalyses the reaction 2-C-methyl-D-erythritol 4-phosphate + CTP + H(+) = 4-CDP-2-C-methyl-D-erythritol + diphosphate. It participates in isoprenoid biosynthesis; isopentenyl diphosphate biosynthesis via DXP pathway; isopentenyl diphosphate from 1-deoxy-D-xylulose 5-phosphate: step 2/6. In terms of biological role, catalyzes the formation of 4-diphosphocytidyl-2-C-methyl-D-erythritol from CTP and 2-C-methyl-D-erythritol 4-phosphate (MEP). The polypeptide is 2-C-methyl-D-erythritol 4-phosphate cytidylyltransferase (Clostridium perfringens (strain SM101 / Type A)).